Here is a 564-residue protein sequence, read N- to C-terminus: O-fucosyltransferase 5 (564 aa).

The tract at residues 1–28 (MVRNSSDEEEDHRNLIPQNDTRDNDLNL) is disordered. Residues 70 to 90 (YVVAAVSLTLFVGLLFLFTDT) traverse the membrane as a helical; Signal-anchor for type II membrane protein segment. 3 N-linked (GlcNAc...) asparagine glycosylation sites follow: Asn-129, Asn-134, and Asn-174. Residues 413-415 (HLR) and 529-530 (TF) each bind substrate.

It belongs to the glycosyltransferase GT106 family.

It localises to the membrane. Its pathway is glycan metabolism. The protein is O-fucosyltransferase 5 of Arabidopsis thaliana (Mouse-ear cress).